The chain runs to 303 residues: Acetylglutamate kinase (303 aa).

Substrate is bound by residues 69–70 (GG), Arg91, and Asn201.

Belongs to the acetylglutamate kinase family. ArgB subfamily.

The protein localises to the cytoplasm. The enzyme catalyses N-acetyl-L-glutamate + ATP = N-acetyl-L-glutamyl 5-phosphate + ADP. Its pathway is amino-acid biosynthesis; L-arginine biosynthesis; N(2)-acetyl-L-ornithine from L-glutamate: step 2/4. Functionally, catalyzes the ATP-dependent phosphorylation of N-acetyl-L-glutamate. The sequence is that of Acetylglutamate kinase from Novosphingobium aromaticivorans (strain ATCC 700278 / DSM 12444 / CCUG 56034 / CIP 105152 / NBRC 16084 / F199).